Here is a 157-residue protein sequence, read N- to C-terminus: Protein Smg (157 aa).

The protein belongs to the Smg family.

The sequence is that of Protein Smg from Yersinia pestis (strain Pestoides F).